A 350-amino-acid chain; its full sequence is Geranylgeranyl diphosphate synthase (350 aa).

The isopentenyl diphosphate site is built by Lys70, Arg73, and His102. 2 residues coordinate Mg(2+): Asp109 and Asp113. The DDXXD motif motif lies at Asp109–Asp113. An isopentenyl diphosphate-binding site is contributed by Arg119. A DDXXD motif motif is present at residues Asp240–Gly244.

This sequence belongs to the FPP/GGPP synthase family. Mg(2+) is required as a cofactor.

It catalyses the reaction isopentenyl diphosphate + (2E,6E)-farnesyl diphosphate = (2E,6E,10E)-geranylgeranyl diphosphate + diphosphate. It participates in isoprenoid biosynthesis; geranylgeranyl diphosphate biosynthesis; geranylgeranyl diphosphate from farnesyl diphosphate and isopentenyl diphosphate: step 1/1. In terms of biological role, catalyzes the condensation of isopentenyl pyrophosphate (IPP) with (2E,6E)-farnesyl diphosphate (E,E-FPP) to yield geranylgeranyl diphosphate (GGPP). This Mycobacterium tuberculosis (strain ATCC 25618 / H37Rv) protein is Geranylgeranyl diphosphate synthase.